A 62-amino-acid chain; its full sequence is Large ribosomal subunit protein bL28 (62 aa).

This sequence belongs to the bacterial ribosomal protein bL28 family.

The polypeptide is Large ribosomal subunit protein bL28 (Streptococcus thermophilus (strain CNRZ 1066)).